Consider the following 497-residue polypeptide: Kynureninase (497 aa).

The interval 59 to 86 (GRLPAYPPNHAKPGETATAQNGTSNTND) is disordered. Over residues 75–86 (ATAQNGTSNTND) the composition is skewed to polar residues. Pyridoxal 5'-phosphate contacts are provided by residues Leu166, Thr167, 194 to 197 (FPSD), Asp278, His281, and Tyr303. Lys304 is modified (N6-(pyridoxal phosphate)lysine). Trp337 and Asn365 together coordinate pyridoxal 5'-phosphate.

It belongs to the kynureninase family. Homodimer. Requires pyridoxal 5'-phosphate as cofactor.

It localises to the cytoplasm. It catalyses the reaction L-kynurenine + H2O = anthranilate + L-alanine + H(+). The catalysed reaction is 3-hydroxy-L-kynurenine + H2O = 3-hydroxyanthranilate + L-alanine + H(+). It participates in amino-acid degradation; L-kynurenine degradation; L-alanine and anthranilate from L-kynurenine: step 1/1. It functions in the pathway cofactor biosynthesis; NAD(+) biosynthesis; quinolinate from L-kynurenine: step 2/3. Functionally, catalyzes the cleavage of L-kynurenine (L-Kyn) and L-3-hydroxykynurenine (L-3OHKyn) into anthranilic acid (AA) and 3-hydroxyanthranilic acid (3-OHAA), respectively. The protein is Kynureninase of Pyricularia oryzae (strain 70-15 / ATCC MYA-4617 / FGSC 8958) (Rice blast fungus).